The sequence spans 299 residues: Pectin lyase (299 aa).

The signal sequence occupies residues 1–18 (MKFSTFVSLGLTAITALA). Composition is skewed to low complexity over residues 82-91 (RSAATSPSSD) and 232-246 (SASA…TTRT). Disordered stretches follow at residues 82 to 105 (RSAA…PSPS) and 227 to 246 (SRGR…TTRT).

This sequence belongs to the polysaccharide lyase 1 family.

It localises to the secreted. It carries out the reaction Eliminative cleavage of (1-&gt;4)-alpha-D-galacturonan methyl ester to give oligosaccharides with 4-deoxy-6-O-methyl-alpha-D-galact-4-enuronosyl groups at their non-reducing ends.. The protein is Pectin lyase (PELA) of Peyronellaea pinodes (Pea foot rot fungus).